The primary structure comprises 155 residues: SsrA-binding protein (155 aa).

This sequence belongs to the SmpB family.

The protein localises to the cytoplasm. Its function is as follows. Required for rescue of stalled ribosomes mediated by trans-translation. Binds to transfer-messenger RNA (tmRNA), required for stable association of tmRNA with ribosomes. tmRNA and SmpB together mimic tRNA shape, replacing the anticodon stem-loop with SmpB. tmRNA is encoded by the ssrA gene; the 2 termini fold to resemble tRNA(Ala) and it encodes a 'tag peptide', a short internal open reading frame. During trans-translation Ala-aminoacylated tmRNA acts like a tRNA, entering the A-site of stalled ribosomes, displacing the stalled mRNA. The ribosome then switches to translate the ORF on the tmRNA; the nascent peptide is terminated with the 'tag peptide' encoded by the tmRNA and targeted for degradation. The ribosome is freed to recommence translation, which seems to be the essential function of trans-translation. The sequence is that of SsrA-binding protein from Bacillus cereus (strain B4264).